The following is an 857-amino-acid chain: MDYLTDVTGRSSRVLRGTVNRLWYGHRQVRFQDCLQDVQRENMARPPQALRSDTGQRKTLEKKDGRRMSFQRPKGTMEYTVESRDSLNSIALKFDTTPNELVQLNKLFSRAVVPGQLLYVPDPDYISSVESSPSLSPISLLSPTSSEAEFEKRTDTERMPHKESTSSPAYSTTRQSRVVSSTSEEEEAFTEKFLKINCKYITDGKGIVTGVLLVTPNNIMFDPHKNDLLVQENGCEEYGIMCPMEEVTSAAMHKEIVNSKLKDSIPVDVDQLSCMREFCHFKKISPGNLHDLDSKMWDAGNDSASTAPRSTEESLSEDVFTESELSPIREEHLSSDELRQDKSSGTSSESVQTINQNISECSVNISDCADASDDVKGSLEPSGNDSGIVSSINDLERSESSMNVGDGLDKDISESSIVLTEANEGQAESKGSKNNCNDGNLADNQTGDQNHSREAAVVGNHRHEALQEKTLKQSFGDSETEAEELRKFWKDLTMQQAKQQREDMQHTTQKEIKGKMPTAETHIEGVCSSVAKEKRRHRTHRYLCLRVGKPMRKTFVSQASASMQQYAQRDKLEYWFAVPHERSDHLYSFFIQWSPDLYAEELGESAREPGFVVVKKNEEGESSDRSTNDSASRLWEVVSVAEYHRRIDALNTEELRTLCRRLKITTREDVNSKQATNIKHDQEPESFRPNLSDPSSLLQTEQIEKLTKHLPPRTIGYPWTLVYSTAKHGMSLKTLYRLMLGLDTPVLLVIKDSDSQIFGALASEPFKVSDCFYGTGETFLFTFCPDFEVFKWTGDNMFFIKGDMDSLAFGGGGGEFALWLDGDSYHGRSHTCKTFGNSILSKKEDFIVQDIEIWAFE.

The segment at 43-74 (MARPPQALRSDTGQRKTLEKKDGRRMSFQRPK) is disordered. Positions 54-67 (TGQRKTLEKKDGRR) are enriched in basic and acidic residues. In terms of domain architecture, LysM spans 77-120 (MEYTVESRDSLNSIALKFDTTPNELVQLNKLFSRAVVPGQLLYV). Residues 131-146 (SSPSLSPISLLSPTSS) show a composition bias toward low complexity. Residues 131 to 183 (SSPSLSPISLLSPTSSEAEFEKRTDTERMPHKESTSSPAYSTTRQSRVVSSTS) are disordered. Residues 149–164 (EFEKRTDTERMPHKES) show a composition bias toward basic and acidic residues. Residues 171 to 182 (STTRQSRVVSST) are compositionally biased toward low complexity. The region spanning 190–249 (TEKFLKINCKYITDGKGIVTGVLLVTPNNIMFDPHKNDLLVQENGCEEYGIMCPMEEVTS) is the GRAM domain. Disordered regions lie at residues 300-353 (GNDS…SVQT), 372-409 (SDDV…DGLD), 421-450 (EANE…GDQN), and 673-694 (KQAT…LSDP). Residues 327-342 (PIREEHLSSDELRQDK) show a composition bias toward basic and acidic residues. 3 stretches are compositionally biased toward polar residues: residues 343–353 (SSGTSSESVQT), 381–393 (PSGN…SSIN), and 432–449 (SKNN…TGDQ). The TLDc domain occupies 696-857 (SLLQTEQIEK…VQDIEIWAFE (162 aa)).

It belongs to the OXR1 family.

The protein resides in the mitochondrion. May be involved in protection from oxidative damage. The chain is Oxidation resistance protein 1 (oxr1) from Xenopus laevis (African clawed frog).